The chain runs to 256 residues: 5-keto-4-deoxy-D-glucarate aldolase (256 aa).

The Proton acceptor role is filled by H50. Q151 lines the substrate pocket. E153 is a binding site for Mg(2+). 2 residues coordinate substrate: S178 and D179. Mg(2+) is bound at residue D179.

The protein belongs to the HpcH/HpaI aldolase family. KDGluc aldolase subfamily. In terms of assembly, homohexamer; trimer of dimers. Mg(2+) serves as cofactor.

It catalyses the reaction 5-dehydro-4-deoxy-D-glucarate = 2-hydroxy-3-oxopropanoate + pyruvate. The enzyme catalyses 2-dehydro-3-deoxy-D-glucarate = 2-hydroxy-3-oxopropanoate + pyruvate. It functions in the pathway carbohydrate acid metabolism; galactarate degradation; D-glycerate from galactarate: step 2/3. In terms of biological role, catalyzes the reversible retro-aldol cleavage of both 5-keto-4-deoxy-D-glucarate and 2-keto-3-deoxy-D-glucarate to pyruvate and tartronic semialdehyde. This Escherichia coli (strain ATCC 8739 / DSM 1576 / NBRC 3972 / NCIMB 8545 / WDCM 00012 / Crooks) protein is 5-keto-4-deoxy-D-glucarate aldolase.